Reading from the N-terminus, the 629-residue chain is tRNA uridine 5-carboxymethylaminomethyl modification enzyme MnmG (629 aa).

Residues 13-18 (GGGHAG), valine 125, and serine 180 each bind FAD. 273-287 (GPRYCPSIEDKVMRF) provides a ligand contact to NAD(+). Residue glutamine 370 coordinates FAD.

This sequence belongs to the MnmG family. In terms of assembly, homodimer. Heterotetramer of two MnmE and two MnmG subunits. It depends on FAD as a cofactor.

It is found in the cytoplasm. NAD-binding protein involved in the addition of a carboxymethylaminomethyl (cmnm) group at the wobble position (U34) of certain tRNAs, forming tRNA-cmnm(5)s(2)U34. The chain is tRNA uridine 5-carboxymethylaminomethyl modification enzyme MnmG from Photobacterium profundum (strain SS9).